The chain runs to 519 residues: uncharacterized protein (519 aa).

Residues 477–486 (IKRERAHVTQ) are compositionally biased toward basic residues. The interval 477-519 (IKRERAHVTQRNKPPPSGGDTAVAEGFEPPDGVSRLSLSRRVH) is disordered.

This is an uncharacterized protein from Mycobacterium tuberculosis (strain ATCC 25618 / H37Rv).